A 274-amino-acid polypeptide reads, in one-letter code: Ceramide synthase (274 aa).

The TLC domain maps to 34-261 (ADAVIVSARL…ICRGACRLFW (228 aa)). 4 helical membrane passes run 130-150 (FLMV…SVVW), 159-179 (LGCM…KILI), 194-214 (ALML…LYWA), and 223-243 (LLAV…LLLA).

In terms of tissue distribution, expressed in testis. Expressed in the retina with higher expression levels in the macular than in the peripheral region.

The protein localises to the golgi apparatus membrane. Its subcellular location is the endoplasmic reticulum membrane. The enzyme catalyses sphing-4-enine + octadecanoyl-CoA = N-octadecanoylsphing-4-enine + CoA + H(+). The catalysed reaction is eicosanoyl-CoA + sphing-4-enine = N-eicosanoyl-sphing-4-enine + CoA + H(+). It catalyses the reaction sphing-4-enine + hexadecanoyl-CoA = N-hexadecanoylsphing-4-enine + CoA + H(+). In terms of biological role, involved in ceramide synthesis. In Homo sapiens (Human), this protein is Ceramide synthase.